The chain runs to 115 residues: MLDKIKNLSELLSNMGALREKMEDVKKRIASIRVVGDAGAGMVTVTATGEGQIINVFINKQLFDSDDNKMLEDLVMAATNDALKKAKEATAYEFQAASGGLDFSEISKMFGGNFG.

Belongs to the YbaB/EbfC family. Homodimer.

Its subcellular location is the cytoplasm. The protein localises to the nucleoid. Functionally, binds to DNA and alters its conformation. May be involved in regulation of gene expression, nucleoid organization and DNA protection. The sequence is that of Nucleoid-associated protein LBL_0065 from Leptospira borgpetersenii serovar Hardjo-bovis (strain L550).